The sequence spans 110 residues: Nucleoid-associated protein Sfri_2406 (110 aa).

The protein belongs to the YbaB/EbfC family. In terms of assembly, homodimer.

It localises to the cytoplasm. The protein localises to the nucleoid. Functionally, binds to DNA and alters its conformation. May be involved in regulation of gene expression, nucleoid organization and DNA protection. The protein is Nucleoid-associated protein Sfri_2406 of Shewanella frigidimarina (strain NCIMB 400).